We begin with the raw amino-acid sequence, 1000 residues long: UPF0182 protein SCO5204 (1000 aa).

The next 7 helical transmembrane spans lie at 26 to 48, 70 to 92, 121 to 143, 177 to 199, 220 to 237, 267 to 289, and 296 to 318; these read LLLT…GFWT, IGLF…WLAH, WLLL…GQWR, FLLG…THYL, LSVL…AYWL, LPAK…ATLW, and PVIG…PALV. Disordered stretches follow at residues 884 to 908 and 943 to 1000; these read AETE…NPTV and EALQ…ADTG. The span at 888 to 897 shows a compositional bias: acidic residues; the sequence is QPPDEGDDTT. Composition is skewed to basic and acidic residues over residues 943 to 953 and 963 to 984; these read EALQRAEDAQA and NGDD…DKAG.

It belongs to the UPF0182 family.

It localises to the cell membrane. This is UPF0182 protein SCO5204 from Streptomyces coelicolor (strain ATCC BAA-471 / A3(2) / M145).